A 919-amino-acid chain; its full sequence is Probable glucan 1,3-alpha-glucosidase (919 aa).

The N-terminal stretch at 1–28 is a signal peptide; it reads MDPPPRPRPHRVAVLLLLLLASSPAARA. Asp-510 functions as the Nucleophile in the catalytic mechanism. Glu-513 is a catalytic residue. Residue Asp-586 is the Proton donor of the active site. Asn-802 carries N-linked (GlcNAc...) asparagine glycosylation.

It belongs to the glycosyl hydrolase 31 family. Heterodimer of a catalytic alpha subunit and a beta subunit.

The protein localises to the endoplasmic reticulum. It catalyses the reaction N(4)-(alpha-D-Glc-(1-&gt;3)-alpha-D-Man-(1-&gt;2)-alpha-D-Man-(1-&gt;2)-alpha-D-Man-(1-&gt;3)-[alpha-D-Man-(1-&gt;2)-alpha-D-Man-(1-&gt;3)-[alpha-D-Man-(1-&gt;2)-alpha-D-Man-(1-&gt;6)]-alpha-D-Man-(1-&gt;6)]-beta-D-Man-(1-&gt;4)-beta-D-GlcNAc-(1-&gt;4)-beta-D-GlcNAc)-L-asparaginyl-[protein] + H2O = N(4)-(alpha-D-Man-(1-&gt;2)-alpha-D-Man-(1-&gt;2)-alpha-D-Man-(1-&gt;3)-[alpha-D-Man-(1-&gt;2)-alpha-D-Man-(1-&gt;3)-[alpha-D-Man-(1-&gt;2)-alpha-D-Man-(1-&gt;6)]-alpha-D-Man-(1-&gt;6)]-beta-D-Man-(1-&gt;4)-beta-D-GlcNAc-(1-&gt;4)-beta-D-GlcNAc)-L-asparaginyl-[protein] (N-glucan mannose isomer 9A1,2,3B1,2,3) + beta-D-glucose. The enzyme catalyses N(4)-(alpha-D-Glc-(1-&gt;3)-alpha-D-Glc-(1-&gt;3)-alpha-D-Man-(1-&gt;2)-alpha-D-Man-(1-&gt;2)-alpha-D-Man-(1-&gt;3)-[alpha-D-Man-(1-&gt;2)-alpha-D-Man-(1-&gt;3)-[alpha-D-Man-(1-&gt;2)-alpha-D-Man-(1-&gt;6)]-alpha-D-Man-(1-&gt;6)]-beta-D-Man-(1-&gt;4)-beta-D-GlcNAc-(1-&gt;4)-beta-D-GlcNAc)-L-asparaginyl-[protein] + H2O = N(4)-(alpha-D-Glc-(1-&gt;3)-alpha-D-Man-(1-&gt;2)-alpha-D-Man-(1-&gt;2)-alpha-D-Man-(1-&gt;3)-[alpha-D-Man-(1-&gt;2)-alpha-D-Man-(1-&gt;3)-[alpha-D-Man-(1-&gt;2)-alpha-D-Man-(1-&gt;6)]-alpha-D-Man-(1-&gt;6)]-beta-D-Man-(1-&gt;4)-beta-D-GlcNAc-(1-&gt;4)-beta-D-GlcNAc)-L-asparaginyl-[protein] + beta-D-glucose. Its pathway is glycan metabolism; N-glycan metabolism. Functionally, cleaves sequentially the 2 innermost alpha-1,3-linked glucose residues from the Glc(2)Man(9)GlcNAc(2) oligosaccharide precursor of immature glycoproteins. May be required for defense response elicited by pathogen-associated molecular patterns (PAMPs). The polypeptide is Probable glucan 1,3-alpha-glucosidase (Oryza sativa subsp. japonica (Rice)).